Here is a 127-residue protein sequence, read N- to C-terminus: Large ribosomal subunit protein bL12 (127 aa).

The protein belongs to the bacterial ribosomal protein bL12 family. As to quaternary structure, homodimer. Part of the ribosomal stalk of the 50S ribosomal subunit. Forms a multimeric L10(L12)X complex, where L10 forms an elongated spine to which 2 to 4 L12 dimers bind in a sequential fashion. Binds GTP-bound translation factors.

Functionally, forms part of the ribosomal stalk which helps the ribosome interact with GTP-bound translation factors. Is thus essential for accurate translation. This is Large ribosomal subunit protein bL12 from Bordetella bronchiseptica (strain ATCC BAA-588 / NCTC 13252 / RB50) (Alcaligenes bronchisepticus).